A 204-amino-acid chain; its full sequence is Holliday junction branch migration complex subunit RuvA (204 aa).

The segment at 1 to 64 (MIGRLCGTAE…EDAITLFGFI (64 aa)) is domain I. Positions 65 to 143 (DAAERDWFRL…AMPTGSAFIP (79 aa)) are domain II. A flexible linker region spans residues 144-154 (TGTAPPVAPPQ). Residues 154–204 (QGKLADALSALVNLGYRRAEAEAALSAVQAEAGEDAALDELIRGGLRRLAR) are domain III.

This sequence belongs to the RuvA family. As to quaternary structure, homotetramer. Forms an RuvA(8)-RuvB(12)-Holliday junction (HJ) complex. HJ DNA is sandwiched between 2 RuvA tetramers; dsDNA enters through RuvA and exits via RuvB. An RuvB hexamer assembles on each DNA strand where it exits the tetramer. Each RuvB hexamer is contacted by two RuvA subunits (via domain III) on 2 adjacent RuvB subunits; this complex drives branch migration. In the full resolvosome a probable DNA-RuvA(4)-RuvB(12)-RuvC(2) complex forms which resolves the HJ.

Its subcellular location is the cytoplasm. In terms of biological role, the RuvA-RuvB-RuvC complex processes Holliday junction (HJ) DNA during genetic recombination and DNA repair, while the RuvA-RuvB complex plays an important role in the rescue of blocked DNA replication forks via replication fork reversal (RFR). RuvA specifically binds to HJ cruciform DNA, conferring on it an open structure. The RuvB hexamer acts as an ATP-dependent pump, pulling dsDNA into and through the RuvAB complex. HJ branch migration allows RuvC to scan DNA until it finds its consensus sequence, where it cleaves and resolves the cruciform DNA. This is Holliday junction branch migration complex subunit RuvA from Acidiphilium cryptum (strain JF-5).